A 136-amino-acid polypeptide reads, in one-letter code: Putative pre-16S rRNA nuclease (136 aa).

The protein belongs to the YqgF nuclease family.

Its subcellular location is the cytoplasm. Could be a nuclease involved in processing of the 5'-end of pre-16S rRNA. This chain is Putative pre-16S rRNA nuclease, found in Francisella tularensis subsp. holarctica (strain FTNF002-00 / FTA).